The following is a 134-amino-acid chain: Small ribosomal subunit protein uS8 (134 aa).

This sequence belongs to the universal ribosomal protein uS8 family. As to quaternary structure, part of the 30S ribosomal subunit. Contacts proteins S5 and S12.

One of the primary rRNA binding proteins, it binds directly to 16S rRNA central domain where it helps coordinate assembly of the platform of the 30S subunit. This is Small ribosomal subunit protein uS8 from Fervidobacterium nodosum (strain ATCC 35602 / DSM 5306 / Rt17-B1).